Here is a 474-residue protein sequence, read N- to C-terminus: MSAFQQAQAPARAIDPDSDVEEEALVNDYKEQVQYEEDDAESTQMSLAAQTDDIQSRLAAAAQPLDYSAGLEVKFSSYDSYCSLFHFILNSEGPVDLEPPSYYWAWDVIDEFIYQFNSFSSYRARIARQGNNEEEIAMLRENPNTWGCYSVLNVLYSLIQKSQITEQLAAMKRNEDPAAVAGEYGSKNLYKMLGYFSIIGLLRVHTLLGDFSLALKTLDDIELNKKAMFARVMAAHFTTYYYVGFSYMMMRRYADAIRMFSHILVYVSRTKNFQKNAQYDSITKKNDQMYALIAICVAFQPTRLDDTIHTALREKYGDQLLKLQRGGPEALPIYEELFRTACPKFISPVPPNFDEPEANIDPIEHHLSVFMDEVKTNMFNPTIKSYLRLYTTMDLKKLAGFLEVKPEELRGWLMVNKQRTKQLRWTDGGLLEGELVNVSDLDYALQGDLIHISEAKVGRKLVDWYLRNLSRTYA.

A PCI domain is found at 255–449 (DAIRMFSHIL…DLDYALQGDL (195 aa)).

The protein belongs to the eIF-3 subunit L family. As to quaternary structure, component of the eukaryotic translation initiation factor 3 (eIF-3) complex.

The protein resides in the cytoplasm. In terms of biological role, component of the eukaryotic translation initiation factor 3 (eIF-3) complex, which is involved in protein synthesis of a specialized repertoire of mRNAs and, together with other initiation factors, stimulates binding of mRNA and methionyl-tRNAi to the 40S ribosome. The eIF-3 complex specifically targets and initiates translation of a subset of mRNAs involved in cell proliferation. The protein is Eukaryotic translation initiation factor 3 subunit L of Neurospora crassa (strain ATCC 24698 / 74-OR23-1A / CBS 708.71 / DSM 1257 / FGSC 987).